Reading from the N-terminus, the 572-residue chain is Glutamate--tRNA ligase (572 aa).

The 'HIGH' region motif lies at P112–N122.

It belongs to the class-I aminoacyl-tRNA synthetase family. Glutamate--tRNA ligase type 2 subfamily.

Its subcellular location is the cytoplasm. The catalysed reaction is tRNA(Glu) + L-glutamate + ATP = L-glutamyl-tRNA(Glu) + AMP + diphosphate. Functionally, catalyzes the attachment of glutamate to tRNA(Glu) in a two-step reaction: glutamate is first activated by ATP to form Glu-AMP and then transferred to the acceptor end of tRNA(Glu). The chain is Glutamate--tRNA ligase from Methanocella arvoryzae (strain DSM 22066 / NBRC 105507 / MRE50).